A 270-amino-acid polypeptide reads, in one-letter code: Cytochrome c oxidase subunit 3 (270 aa).

Transmembrane regions (helical) follow at residues 21–41 (PWPF…VLYF), 46–66 (GSLV…FVWW), 90–110 (GIML…WAFF), 131–151 (FFSP…SGCA), 167–187 (AIFS…FQIY), 205–225 (FFMI…FLFV), and 248–268 (WYWH…YWWG).

It belongs to the cytochrome c oxidase subunit 3 family. As to quaternary structure, component of the cytochrome c oxidase (complex IV, CIV), a multisubunit enzyme composed of a catalytic core of 3 subunits and several supernumerary subunits. The complex exists as a monomer or a dimer and forms supercomplexes (SCs) in the inner mitochondrial membrane with ubiquinol-cytochrome c oxidoreductase (cytochrome b-c1 complex, complex III, CIII).

The protein localises to the mitochondrion inner membrane. It catalyses the reaction 4 Fe(II)-[cytochrome c] + O2 + 8 H(+)(in) = 4 Fe(III)-[cytochrome c] + 2 H2O + 4 H(+)(out). Functionally, component of the cytochrome c oxidase, the last enzyme in the mitochondrial electron transport chain which drives oxidative phosphorylation. The respiratory chain contains 3 multisubunit complexes succinate dehydrogenase (complex II, CII), ubiquinol-cytochrome c oxidoreductase (cytochrome b-c1 complex, complex III, CIII) and cytochrome c oxidase (complex IV, CIV), that cooperate to transfer electrons derived from NADH and succinate to molecular oxygen, creating an electrochemical gradient over the inner membrane that drives transmembrane transport and the ATP synthase. Cytochrome c oxidase is the component of the respiratory chain that catalyzes the reduction of oxygen to water. Electrons originating from reduced cytochrome c in the intermembrane space (IMS) are transferred via the dinuclear copper A center (CU(A)) of subunit 2 and heme A of subunit 1 to the active site in subunit 1, a binuclear center (BNC) formed by heme A3 and copper B (CU(B)). The BNC reduces molecular oxygen to 2 water molecules using 4 electrons from cytochrome c in the IMS and 4 protons from the mitochondrial matrix. The sequence is that of Cytochrome c oxidase subunit 3 (COX3) from Cyanidium caldarium (Red alga).